A 385-amino-acid chain; its full sequence is Alanine--glyoxylate aminotransferase 1 (385 aa).

Lys-201 is modified (N6-(pyridoxal phosphate)lysine). Arg-354 serves as a coordination point for substrate.

Belongs to the class-V pyridoxal-phosphate-dependent aminotransferase family. As to quaternary structure, homodimer. Pyridoxal 5'-phosphate serves as cofactor.

The catalysed reaction is glyoxylate + L-alanine = glycine + pyruvate. The protein operates within amino-acid biosynthesis; glycine biosynthesis; glycine from glyoxylate: step 1/1. Has alanine:glyoxylate aminotransferase activity. The chain is Alanine--glyoxylate aminotransferase 1 from Saccharomyces cerevisiae (strain ATCC 204508 / S288c) (Baker's yeast).